The following is a 286-amino-acid chain: MASLNEIKKRIKIIESTSKITNAMKLVSSAKLKKQKELFLNESIYYKKFYDLFTYIKSNSDSEILSLKKSEEGKTIWLAFFSSMGLCGSFNLNIVKELQKHIKSNDEIWLIGKKGKNLIKSKGIEAEISLDLELDDKDINFDLFHIIAENLLAKYKNDYNIKSIKVIYSKFVNSLSFTPSVFSLLPLDKAIEKPRLDKPNNGADFSIQPNANDVFESILIDYLATCIHGAIVESKVCENASRRNAMDSATKNANELIKNYKLEFNRKRQSEITQEITEIVSGAKGE.

The protein belongs to the ATPase gamma chain family. In terms of assembly, F-type ATPases have 2 components, CF(1) - the catalytic core - and CF(0) - the membrane proton channel. CF(1) has five subunits: alpha(3), beta(3), gamma(1), delta(1), epsilon(1). CF(0) has three main subunits: a, b and c.

Its subcellular location is the cell membrane. Produces ATP from ADP in the presence of a proton gradient across the membrane. The gamma chain is believed to be important in regulating ATPase activity and the flow of protons through the CF(0) complex. The sequence is that of ATP synthase gamma chain from Malacoplasma penetrans (strain HF-2) (Mycoplasma penetrans).